The following is a 510-amino-acid chain: Serine/threonine-protein kinase RIO3 (510 aa).

Disordered regions lie at residues G100–D126 and D143–G191. Composition is skewed to basic and acidic residues over residues T108–Q118 and T162–N179. The Protein kinase domain maps to L235 to N510. Residues I241–V249 and K275 each bind ATP. D388 serves as the catalytic Proton acceptor. Residues R474 to A499 are compositionally biased toward basic and acidic residues. The segment at R474–N510 is disordered.

The protein belongs to the protein kinase superfamily. RIO-type Ser/Thr kinase family. Requires Mg(2+) as cofactor. In terms of tissue distribution, expressed in tail neurons (PVQ and PHAL/PQR).

It carries out the reaction L-seryl-[protein] + ATP = O-phospho-L-seryl-[protein] + ADP + H(+). The catalysed reaction is L-threonyl-[protein] + ATP = O-phospho-L-threonyl-[protein] + ADP + H(+). The polypeptide is Serine/threonine-protein kinase RIO3 (riok-3) (Caenorhabditis elegans).